We begin with the raw amino-acid sequence, 875 residues long: Phosphatidylinositol 3-kinase VPS34 (875 aa).

Positions 14–188 (LDVPLKVKIK…WLDEITISKL (175 aa)) constitute a C2 PI3K-type domain. The 234-residue stretch at 293–526 (LDKQVKPDIK…SSFWSRLDKK (234 aa)) folds into the PIK helical domain. Positions 593–859 (CPETSKVFKS…LINDSVNALL (267 aa)) constitute a PI3K/PI4K catalytic domain. The tract at residues 599 to 605 (VFKSSLS) is G-loop. The catalytic loop stretch occupies residues 728-736 (GVGDRHLDN). Residues 747-768 (HADFGYILGQDPKPFPPLMKLP) are activation loop.

The protein belongs to the PI3/PI4-kinase family. As to quaternary structure, component of the autophagy-specific VPS34 PI3-kinase complex I composed of VPS15, VPS30, VPS34, ATG14 and ATG38, and of the VPS34 PI3-kinase complex II composed of VPS15, VPS30, VPS34 and VPS38. Interacts directly with ATG38. Interacts directly with VPS34. In terms of processing, autophosphorylated. Might also be phosphorylated by VPS15.

The protein resides in the golgi apparatus. It localises to the trans-Golgi network membrane. The protein localises to the endosome membrane. The enzyme catalyses a 1,2-diacyl-sn-glycero-3-phospho-(1D-myo-inositol) + ATP = a 1,2-diacyl-sn-glycero-3-phospho-(1D-myo-inositol-3-phosphate) + ADP + H(+). Phosphatidylinositol 3-kinase activity is directly dependent on VPS15 protein kinase activity. Its function is as follows. Phosphatidylinositol 3-kinase required for cytoplasm to vacuole transport (Cvt) and autophagy as a part of the autophagy-specific VPS34 PI3-kinase complex I. This complex is essential to recruit the ATG8-phosphatidylinositol conjugate and the ATG12-ATG5 conjugate to the pre-autophagosomal structure. Also involved in endosome-to-Golgi retrograde transport as part of the VPS34 PI3-kinase complex II. This second complex is required for the endosome-to-Golgi retrieval of PEP1 and KEX2, and the recruitment of VPS5 and VPS7, two components of the retromer complex, to endosomal membranes (probably through the synthesis of a specific pool of phosphatidylinositol 3-phosphate recruiting the retromer to the endosomes). Its activation by VPS15 may lead to the phosphorylation of phosphatidylinositol in the sorting compartment membrane. Finally, it might also be involved in ethanol tolerance and cell wall integrity. The sequence is that of Phosphatidylinositol 3-kinase VPS34 (VPS34) from Saccharomyces cerevisiae (strain ATCC 204508 / S288c) (Baker's yeast).